The sequence spans 500 residues: Kynurenine 3-monooxygenase (500 aa).

This sequence belongs to the aromatic-ring hydroxylase family. KMO subfamily. The cofactor is FAD.

It is found in the mitochondrion outer membrane. The catalysed reaction is L-kynurenine + NADPH + O2 + H(+) = 3-hydroxy-L-kynurenine + NADP(+) + H2O. Its pathway is cofactor biosynthesis; NAD(+) biosynthesis; quinolinate from L-kynurenine: step 1/3. Catalyzes the hydroxylation of L-kynurenine (L-Kyn) to form 3-hydroxy-L-kynurenine (L-3OHKyn). Required for synthesis of quinolinic acid. In Aspergillus terreus (strain NIH 2624 / FGSC A1156), this protein is Kynurenine 3-monooxygenase (bna4).